The following is a 195-amino-acid chain: TM2 domain-containing protein C41D11.9 (195 aa).

A signal peptide spans methionine 1–serine 20. Topologically, residues isoleucine 21 to lysine 136 are extracellular. 3 N-linked (GlcNAc...) asparagine glycosylation sites follow: asparagine 55, asparagine 93, and asparagine 127. The TM2 domain occupies glycine 131 to valine 179. A helical membrane pass occupies residues threonine 137–tryptophan 157. The Cytoplasmic portion of the chain corresponds to lysine 158–lysine 163. Residues leucine 164–glycine 184 traverse the membrane as a helical segment. The Extracellular portion of the chain corresponds to tyrosine 185–isoleucine 195.

This sequence belongs to the TM2 family.

The protein resides in the membrane. The protein is TM2 domain-containing protein C41D11.9 of Caenorhabditis elegans.